The sequence spans 383 residues: S-adenosylmethionine synthase (383 aa).

H15 contributes to the ATP binding site. Position 17 (D17) interacts with Mg(2+). K(+) is bound at residue E43. L-methionine is bound by residues E56 and Q99. Residues 99 to 109 (QSPDINQGVDR) are flexible loop. ATP-binding positions include 164 to 166 (DAK), 230 to 231 (RF), D239, 245 to 246 (RK), A262, and K266. Residue D239 participates in L-methionine binding. K270 contacts L-methionine.

It belongs to the AdoMet synthase family. As to quaternary structure, homotetramer; dimer of dimers. The cofactor is Mg(2+). K(+) is required as a cofactor.

The protein resides in the cytoplasm. It carries out the reaction L-methionine + ATP + H2O = S-adenosyl-L-methionine + phosphate + diphosphate. The protein operates within amino-acid biosynthesis; S-adenosyl-L-methionine biosynthesis; S-adenosyl-L-methionine from L-methionine: step 1/1. In terms of biological role, catalyzes the formation of S-adenosylmethionine (AdoMet) from methionine and ATP. The overall synthetic reaction is composed of two sequential steps, AdoMet formation and the subsequent tripolyphosphate hydrolysis which occurs prior to release of AdoMet from the enzyme. The protein is S-adenosylmethionine synthase of Pectobacterium carotovorum subsp. carotovorum (strain PC1).